The primary structure comprises 312 residues: MTVLAPPRPRSLLDFQDWLPERLSALLDNADTMHQVLERPVRKVPALQGLTVCTAFFENSTRTRISFELAARRMSADVISFAAGASSLSKGESLRDTVEVLSAYKVDAFVVRHPASGAAHLIARYSGKPVINAGDGRRAHPTQALLDAYTIRQEYGSLAGKKVAIIGDIRHSRVARSNAELLPKLGAEVVLAGPATLLPADLAALPGVTVTTDPKEAVHGAHAVMALRLQQERMNAGYLASLQEYVERYQVNEALLREAESGAIVLHPGPLNRDLEISSEVADGPQSRILKQVENGQAVRMSVLYHLLVGRD.

Arg62 and Thr63 together coordinate carbamoyl phosphate. Lys90 contributes to the L-aspartate binding site. Residues Arg112, His140, and Gln143 each coordinate carbamoyl phosphate. Positions 173 and 228 each coordinate L-aspartate. 2 residues coordinate carbamoyl phosphate: Gly269 and Pro270.

This sequence belongs to the aspartate/ornithine carbamoyltransferase superfamily. ATCase family. Heterododecamer (2C3:3R2) of six catalytic PyrB chains organized as two trimers (C3), and six regulatory PyrI chains organized as three dimers (R2).

It catalyses the reaction carbamoyl phosphate + L-aspartate = N-carbamoyl-L-aspartate + phosphate + H(+). It participates in pyrimidine metabolism; UMP biosynthesis via de novo pathway; (S)-dihydroorotate from bicarbonate: step 2/3. In terms of biological role, catalyzes the condensation of carbamoyl phosphate and aspartate to form carbamoyl aspartate and inorganic phosphate, the committed step in the de novo pyrimidine nucleotide biosynthesis pathway. This chain is Aspartate carbamoyltransferase catalytic subunit, found in Deinococcus geothermalis (strain DSM 11300 / CIP 105573 / AG-3a).